Consider the following 251-residue polypeptide: Fibroblast growth factor 23 (251 aa).

Positions 1-24 are cleaved as a signal peptide; it reads MLGACLRLLVGALCTVCSLGTARA. Cys-95 and Cys-113 are disulfide-bonded. 2 O-linked (GalNAc) threonine glycosylation sites follow: Thr-171 and Thr-178. The disordered stretch occupies residues 175–251; it reads RRHTRSAEDP…DRCRPFPRFV (77 aa). Residues 179–189 show a composition bias toward basic and acidic residues; sequence RSAEDPPERDP. Position 180 is a phosphoserine; by FAM20C (Ser-180).

It belongs to the heparin-binding growth factors family. As to quaternary structure, interacts with FGFR1, FGFR2, FGFR3 and FGFR4. Affinity between fibroblast growth factors (FGFs) and their receptors is increased by KL and heparan sulfate glycosaminoglycans that function as coreceptors. Following secretion this protein is inactivated by cleavage into a N-terminal fragment and a C-terminal fragment. The processing is effected by proprotein convertases. Post-translationally, O-glycosylated at Thr-171 and Thr-178 by GALNT3 and glycosylation of Thr-178 requires previous glycosylation at Thr171. Glycosylation is necessary for secretion; it blocks processing by proprotein convertases when the O-glycan is alpha 2,6-sialylated. Competition between proprotein convertase cleavage and block of cleavage by O-glycosylation determines the level of secreted active FGF23. In terms of processing, phosphorylation at Ser-180 mediated by FAM20C slows down glycosylation at Thr-178 notably. Expressed in the parathyroid.

The protein resides in the secreted. Functionally, regulator of phosphate homeostasis. Inhibits renal tubular phosphate transport by reducing SLC34A1 levels. Regulator of vitamin-D metabolism. Negatively regulates osteoblasts differentiation and matrix mineralization. Acts directly on the parathyroid to decrease PTH secretion. Up-regulates EGR1 expression in the presence of KL. The sequence is that of Fibroblast growth factor 23 (Fgf23) from Rattus norvegicus (Rat).